Consider the following 251-residue polypeptide: MNTNYPILEIKNLKACINENEILKDLNLKIHKGEIHAIMGPNGSGKSTFSKVLAGHPAYNILSGDILFKGSSILNLDPEERSHMGIFLAFQYPIEIPGVSNEDFLRLAYNSKQKFLNKDEVDPISFFTIINEKLKLVDMSPVFLSRNVNEGFSGGEKKRNEILQMILLDSELSILDETDSGLDIDALKIISKGINTFMNQNKAIILITHYQRLLDYVQPNYVHVMQNGKIIKTGTADLAKELESKGYEWLK.

The region spanning 8–250 (LEIKNLKACI…ELESKGYEWL (243 aa)) is the ABC transporter domain. 40–47 (GPNGSGKS) contributes to the ATP binding site.

Belongs to the ABC transporter superfamily. Ycf16 family.

It is found in the plastid. The protein resides in the chloroplast. The sequence is that of Probable ATP-dependent transporter ycf16 (ycf16) from Trieres chinensis (Marine centric diatom).